The chain runs to 334 residues: WD repeat domain 54 (334 aa).

3 WD repeats span residues 162-206 (GHQT…TLLT), 208-247 (IAGF…LHIQ), and 250-289 (AHAR…ESGS).

As to quaternary structure, homodimer and homotrimer; forms tight forms of dimers and trimers. Interacts with IZUMO1 and IZUMO1R/JUNO. Post-translationally, cross-linked to tightly form both dimers and trimers by TGM2. Cross-linking enhances the activation of EGF receptor-mediated signaling pathway. Cross-linking is inhibited by EGF. In terms of processing, ubiquitinated. EGF increases ubiquitination. In terms of tissue distribution, widely expressed in the ovary and testis (at protein level).

The protein resides in the vesicle. It localises to the cytoplasm. Its subcellular location is the cell membrane. Functionally, plays a role in the adhesion and fusion of the sperm-oocyte membrane through its interactions with IZUMO1 and IZUMO1R/JUNO. When cross-linked to form dimers and trimers, it has a regulatory effect on ERK signaling pathway activity in response to EGF stimulation. Colocalizes with the EGF receptor in WDR54-specific vesicle where it sustains the internalization and controls the degradation of the EGF receptor after EGF stimulation. The protein is WD repeat domain 54 (Wdr54) of Rattus norvegicus (Rat).